A 311-amino-acid chain; its full sequence is Homeobox protein CDX-2 (311 aa).

A Phosphoserine modification is found at Ser-60. The interval 111 to 151 (EYHAHHHPHHHPHHPAASPSCASGLLQTLNLGPPGPAATAA) is disordered. Basic residues predominate over residues 114–124 (AHHHPHHHPHH). The interval 185–215 (KDKYRVVYTDHQRLELEKEFHFSRYITIRRK) is interaction with DNA. The segment at residues 185-244 (KDKYRVVYTDHQRLELEKEFHFSRYITIRRKSELAATLGLSERQVKIWFQNRRAKERKIK) is a DNA-binding region (homeobox). An interaction with 5-mCpG DNA region spans residues 227–241 (RQVKIWFQNRRAKER). Positions 239–311 (KERKIKKKQQ…GGVLNSTVTQ (73 aa)) are disordered. The segment covering 248–257 (QQQQQQQQQQ) has biased composition (low complexity). A compositionally biased stretch (pro residues) spans 258 to 268 (PPQPPPQPSQP). Ser-281 is modified (phosphoserine; by CDK2). The 4S motif; modulates transactivation activity and protein stability signature appears at 281 to 293 (SPVTSLQGSVPGS). The segment covering 285–298 (SLQGSVPGSVPGVL) has biased composition (low complexity).

Belongs to the Caudal homeobox family. As to quaternary structure, can bind DNA as a monomer or homodimer. In terms of processing, ubiquitinated, leading to its degradation by the proteasome. Post-translationally, phosphorylation at Ser-60 reduces transactivation capacity. Phosphorylation at Ser-281 reduces transactivation capacity and increases ubiquitin-dependent proteasome degradation. In the intestine, detected in ileum and proximal and distal colon (at protein level). In adult small intestine, predominantly localized in crypt and lower villus cells of the epithelium (at protein level). Expressed in the intestine but not detected in other tissues including stomach, liver, kidney, spleen, brain, heart, lung, pancreas, skeletal muscle and testis. Expressed specifically in gut epithelium where it is not restricted to a particular cell lineage. Abundant expression is seen in the proximal colon with slightly lower levels in distal colon. Expression in the proximal colon is not restricted either to a particular cell lineage or stage of differentiation while in the distal colon it is more abundant in the differentiated cells towards the top of the crypt.

The protein localises to the nucleus. Functionally, transcription factor which regulates the transcription of multiple genes expressed in the intestinal epithelium. Binds to the promoter of the intestinal sucrase-isomaltase SI and activates SI transcription. Binds to the DNA sequence 5'-ATAAAAACTTAT-3' in the promoter region of VDR and activates VDR transcription. Binds to and activates transcription of LPH. Activates transcription of CLDN2 and intestinal mucin MUC2. Binds to the 5'-AATTTTTTACAACACCT-3' DNA sequence in the promoter region of CA1 and activates CA1 transcription. Important in broad range of functions from early differentiation to maintenance of the intestinal epithelial lining of both the small and large intestine. Binds preferentially to methylated DNA. In Mus musculus (Mouse), this protein is Homeobox protein CDX-2 (Cdx2).